The chain runs to 272 residues: Dermonecrotic toxin LspaSicTox-alphaII1 (272 aa).

The active site involves His-5. Mg(2+)-binding residues include Glu-25 and Asp-27. His-41 serves as the catalytic Nucleophile. Intrachain disulfides connect Cys-45–Cys-51 and Cys-47–Cys-190. Asp-85 contributes to the Mg(2+) binding site.

This sequence belongs to the arthropod phospholipase D family. Class II subfamily. The cofactor is Mg(2+). In terms of tissue distribution, expressed by the venom gland.

It is found in the secreted. The enzyme catalyses an N-(acyl)-sphingosylphosphocholine = an N-(acyl)-sphingosyl-1,3-cyclic phosphate + choline. The catalysed reaction is an N-(acyl)-sphingosylphosphoethanolamine = an N-(acyl)-sphingosyl-1,3-cyclic phosphate + ethanolamine. It carries out the reaction a 1-acyl-sn-glycero-3-phosphocholine = a 1-acyl-sn-glycero-2,3-cyclic phosphate + choline. It catalyses the reaction a 1-acyl-sn-glycero-3-phosphoethanolamine = a 1-acyl-sn-glycero-2,3-cyclic phosphate + ethanolamine. Its function is as follows. Dermonecrotic toxins cleave the phosphodiester linkage between the phosphate and headgroup of certain phospholipids (sphingolipid and lysolipid substrates), forming an alcohol (often choline) and a cyclic phosphate. This toxin acts on sphingomyelin (SM). It may also act on ceramide phosphoethanolamine (CPE), lysophosphatidylcholine (LPC) and lysophosphatidylethanolamine (LPE), but not on lysophosphatidylserine (LPS), and lysophosphatidylglycerol (LPG). It acts by transphosphatidylation, releasing exclusively cyclic phosphate products as second products. Induces dermonecrosis, hemolysis, increased vascular permeability, edema, inflammatory response, and platelet aggregation. The polypeptide is Dermonecrotic toxin LspaSicTox-alphaII1 (Loxosceles spadicea (Recluse spider)).